The chain runs to 60 residues: LKCHKLVPPFWKTCPEGKNLCYKMYMVATPMLPVKRGCINVCPKDSALVKYMCCNTNKCN.

Cystine bridges form between Cys3/Cys21, Cys14/Cys38, Cys42/Cys53, and Cys54/Cys59.

This sequence belongs to the three-finger toxin family. Short-chain subfamily. Type IA cytotoxin sub-subfamily. In terms of assembly, monomer in solution; Homodimer and oligomer in the presence of negatively charged lipids forming a pore with a size ranging between 20 and 30 Angstroms. In terms of tissue distribution, expressed by the venom gland.

It localises to the secreted. Its subcellular location is the target cell membrane. Shows cytolytic activity on many different cells by forming pore in lipid membranes. In vivo, increases heart rate or kills the animal by cardiac arrest. In addition, it binds to heparin with high affinity, interacts with Kv channel-interacting protein 1 (KCNIP1) in a calcium-independent manner, and binds to integrin alpha-V/beta-3 (ITGAV/ITGB3) with moderate affinity. This Naja annulifera (Banded Egyptian cobra) protein is Cytotoxin 7.